We begin with the raw amino-acid sequence, 74 residues long: Putative Fe(2+) transport protein A (74 aa).

The protein belongs to the FeoA family.

Functionally, might be involved in Fe(2+) ion uptake. This chain is Putative Fe(2+) transport protein A, found in Campylobacter jejuni subsp. jejuni serotype O:2 (strain ATCC 700819 / NCTC 11168).